The primary structure comprises 512 residues: FAD-dependent monooxygenase prx3 (512 aa).

An N-terminal signal peptide occupies residues 1 to 19 (MLSLKAFLALSLSIHLSQG). One can recognise an FAD-binding PCMH-type domain in the interval 63-235 (CQTTPTCVFA…TRFDLATFSV (173 aa)). A Pros-8alpha-FAD histidine modification is found at His100. N-linked (GlcNAc...) asparagine glycans are attached at residues Asn197, Asn281, Asn307, Asn329, Asn361, and Asn477.

The protein belongs to the oxygen-dependent FAD-linked oxidoreductase family.

Its pathway is sesquiterpene biosynthesis. Its function is as follows. FAD-dependent monooxygenase; part of the gene cluster that mediates the biosynthesis of PR-toxin, a bicyclic sesquiterpene belonging to the eremophilane class and acting as a mycotoxin. The first step of the pathway is catalyzed by the aristolochene synthase which performs the cyclization of trans,trans-farnesyl diphosphate (FPP) to the bicyclic sesquiterpene aristolochene. Following the formation of aristolochene, the non-oxygenated aristolochene is converted to the trioxygenated intermediate eremofortin B, via 7-epi-neopetasone. This conversion appears to involve three enzymes, a hydroxysterol oxidase-like enzyme, the quinone-oxidase prx3 that forms the quinone-type-structure in the bicyclic nucleus of aristolochene with the C8-oxo group and the C-3 hydroxyl group, and the P450 monooxygenase ORF6 that introduces the epoxide at the double bond between carbons 1 and 2. No monoxy or dioxy-intermediates have been reported to be released to the broth, so these three early oxidative reactions may be coupled together. Eremofortin B is further oxidized by another P450 monooxygenase, that introduces a second epoxide between carbons 7 and 11 prior to acetylation to eremofortin A by the acetyltransferase ORF8. The second epoxidation may be performed by a second P450 monooxygenase. After the acetylation step, eremofortin A is converted to eremofortin C and then to PR-toxin. First the conversion of eremofortin A to eremofortin C proceeds by oxidation of the side chain of the molecule at C-12 and is catalyzed by the short-chain oxidoreductase prx1. The cytochrome P450 monooxygenase ORF6 is probably also involved in this step. The primary alcohol formed at C-12 is finally oxidized by the short-chain alcohol dehydrogenase prx4 that forms PR-toxin. This chain is FAD-dependent monooxygenase prx3, found in Penicillium roqueforti (strain FM164).